A 491-amino-acid polypeptide reads, in one-letter code: Ketol-acid reductoisomerase (NADP(+)) (491 aa).

A KARI N-terminal Rossmann domain is found at 15–208; it reads AQLGKCRFMG…GGHRAGVLES (194 aa). NADP(+) contacts are provided by residues 45–48, Arg-68, Arg-76, Ser-78, and 108–110; these read CGAQ and DKQ. Residue His-132 is part of the active site. Residue Gly-158 coordinates NADP(+). KARI C-terminal knotted domains are found at residues 209 to 344 and 345 to 484; these read SFVA…TAPQ and YEGK…MTDM. Residues Asp-217, Glu-221, Glu-389, and Glu-393 each contribute to the Mg(2+) site. Position 414 (Ser-414) interacts with substrate.

Belongs to the ketol-acid reductoisomerase family. Requires Mg(2+) as cofactor.

The enzyme catalyses (2R)-2,3-dihydroxy-3-methylbutanoate + NADP(+) = (2S)-2-acetolactate + NADPH + H(+). It carries out the reaction (2R,3R)-2,3-dihydroxy-3-methylpentanoate + NADP(+) = (S)-2-ethyl-2-hydroxy-3-oxobutanoate + NADPH + H(+). The protein operates within amino-acid biosynthesis; L-isoleucine biosynthesis; L-isoleucine from 2-oxobutanoate: step 2/4. It functions in the pathway amino-acid biosynthesis; L-valine biosynthesis; L-valine from pyruvate: step 2/4. Its function is as follows. Involved in the biosynthesis of branched-chain amino acids (BCAA). Catalyzes an alkyl-migration followed by a ketol-acid reduction of (S)-2-acetolactate (S2AL) to yield (R)-2,3-dihydroxy-isovalerate. In the isomerase reaction, S2AL is rearranged via a Mg-dependent methyl migration to produce 3-hydroxy-3-methyl-2-ketobutyrate (HMKB). In the reductase reaction, this 2-ketoacid undergoes a metal-dependent reduction by NADPH to yield (R)-2,3-dihydroxy-isovalerate. This Klebsiella pneumoniae (strain 342) protein is Ketol-acid reductoisomerase (NADP(+)).